Reading from the N-terminus, the 957-residue chain is Melanoma-associated antigen E1 (957 aa).

Residues 1–433 are disordered; the sequence is MSLVSQNSRR…RNPSKCSIVL (433 aa). Polar residues-rich tracts occupy residues 85–96 and 104–130; these read SEASSASGQPTV and LLAT…SVTL. Over residues 138–156 the composition is skewed to low complexity; the sequence is TSRPPTSSEEPSTSVPATP. 6 stretches are compositionally biased toward polar residues: residues 158 to 177, 220 to 232, 256 to 306, 328 to 344, 364 to 380, and 414 to 428; these read EGTS…TSVV, LSTS…TEGL, RSTT…GPST, LSTS…STSV, RSTS…DTSV, and TLFS…NPSK. MAGE domains are found at residues 491 to 690 and 745 to 936; these read MEQN…YNEA and LESK…YREA. The interval 743–957 is interaction with DTNA; it reads SRLESKARKL…HRQFFVHNFR (215 aa).

As to quaternary structure, interacts with DTNA. Interacts with TRIM28.

The protein resides in the cytoplasm. It localises to the perinuclear region. It is found in the nucleus. Its subcellular location is the cell membrane. Functionally, may enhance ubiquitin ligase activity of RING-type zinc finger-containing E3 ubiquitin-protein ligases. Proposed to act through recruitment and/or stabilization of the Ubl-conjugating enzyme (E2) at the E3:substrate complex. This Macaca fascicularis (Crab-eating macaque) protein is Melanoma-associated antigen E1 (MAGEE1).